The chain runs to 202 residues: Protein DEHYDRATION-INDUCED 19 homolog 5 (202 aa).

The segment covering 88-97 (SHLLKRRKPS) has biased composition (basic residues). Residues 88–120 (SHLLKRRKPSRPSSSWPTPSNNSDPYFEGPPQY) form a disordered region. A compositionally biased stretch (low complexity) spans 98 to 112 (RPSSSWPTPSNNSDP).

This sequence belongs to the Di19 family.

The polypeptide is Protein DEHYDRATION-INDUCED 19 homolog 5 (DI19-5) (Oryza sativa subsp. japonica (Rice)).